Reading from the N-terminus, the 111-residue chain is Tubulin beta chain (111 aa).

A disordered region spans residues 82–111 (SEYQQYQDATAEDEGEFDEEEAEGEGQEYA). A compositionally biased stretch (acidic residues) spans 91 to 111 (TAEDEGEFDEEEAEGEGQEYA).

It belongs to the tubulin family. In terms of assembly, dimer of alpha and beta chains. A typical microtubule is a hollow water-filled tube with an outer diameter of 25 nm and an inner diameter of 15 nM. Alpha-beta heterodimers associate head-to-tail to form protofilaments running lengthwise along the microtubule wall with the beta-tubulin subunit facing the microtubule plus end conferring a structural polarity. Microtubules usually have 13 protofilaments but different protofilament numbers can be found in some organisms and specialized cells. Mg(2+) serves as cofactor.

The protein localises to the cytoplasm. Its subcellular location is the cytoskeleton. Tubulin is the major constituent of microtubules, a cylinder consisting of laterally associated linear protofilaments composed of alpha- and beta-tubulin heterodimers. Microtubules grow by the addition of GTP-tubulin dimers to the microtubule end, where a stabilizing cap forms. Below the cap, tubulin dimers are in GDP-bound state, owing to GTPase activity of alpha-tubulin. The chain is Tubulin beta chain from Lymnaea stagnalis (Great pond snail).